Reading from the N-terminus, the 643-residue chain is MQKPYVFQEIPVHRPNTPLLDKIDSPAQLRLLNEAELLQLAHELRAFLLYSVGQSGGHFGAGLGVVELTVALHYAFNTPEDRLVWDVGHQAYPHKILTGRREQMLTIRQKDGLAAFPRREESPYDTFGVGHSSTSISAALGMAIAARLQNQPRKAIAVIGDGAMTAGMAFEALNHAADTKADLLVILNDNDMSISRNVGGLSNYFARLLASKTYNQMRDSGKRVLQGAPSLMELARKTEEHFKGMVAPGTLFEELGFNYIGPIDGHDLPRLVETLNNIKELNGPQFLHVVTKKGKGFAHAESDPIGYHAINKIEPKPKVQDTAKAPKKPRYSNIFGQWLCDMAEQDASLVGITPAMCEGSDLIEFSKRFPERYYDVAIAEQHAVTLAAGLACDGAKPVVAIYSTFLQRAYDQLIHDVAIQNLDVLFAIDRAGLVGEDGPTHAGSFDLTFLRCIPNMLIMAPSDEDETRKMLTTGYQYTGPAAVRYPRGNGPGADISPGLESLEIGKANLRRRGAQTVILNFGALLPAALGVAEESNFTVVDMRFIKPLDQNMILEMAGSHDLLVTLEENCILGGAGSGVIEFLASQGIAMPVLQLGLPDEFIEHGKPAELHKEVGLDAQGIANAIKKRLKSLNLASPKTGTSA.

Residues His-89 and 130 to 132 (GHS) contribute to the thiamine diphosphate site. Asp-161 contacts Mg(2+). Residues 162 to 163 (GA), Asn-190, Phe-297, and Glu-380 contribute to the thiamine diphosphate site. Residue Asn-190 participates in Mg(2+) binding.

This sequence belongs to the transketolase family. DXPS subfamily. Homodimer. It depends on Mg(2+) as a cofactor. The cofactor is thiamine diphosphate.

It carries out the reaction D-glyceraldehyde 3-phosphate + pyruvate + H(+) = 1-deoxy-D-xylulose 5-phosphate + CO2. It functions in the pathway metabolic intermediate biosynthesis; 1-deoxy-D-xylulose 5-phosphate biosynthesis; 1-deoxy-D-xylulose 5-phosphate from D-glyceraldehyde 3-phosphate and pyruvate: step 1/1. Functionally, catalyzes the acyloin condensation reaction between C atoms 2 and 3 of pyruvate and glyceraldehyde 3-phosphate to yield 1-deoxy-D-xylulose-5-phosphate (DXP). This chain is 1-deoxy-D-xylulose-5-phosphate synthase, found in Hahella chejuensis (strain KCTC 2396).